The sequence spans 308 residues: 50 kDa gamma-zein (308 aa).

An N-terminal signal peptide occupies residues 1-19; the sequence is MKLVLVVLAFIALVSSVSC. The disordered stretch occupies residues 27–159; that stretch reads CGQQQSHEQQ…QPQQPQQYQQ (133 aa). The span at 55-119 shows a compositional bias: low complexity; that stretch reads HHQQQQHQQQ…QHHQQSQGHV (65 aa). Residues 120–129 are compositionally biased toward basic and acidic residues; it reads QQHEQSHEQH. Over residues 130–159 the composition is skewed to low complexity; it reads QGQSHEQQHQQQFQGHDKQQQPQQPQQYQQ. Cys286 carries the GPI-anchor amidated cysteine lipid modification. The propeptide at 287–308 is removed in mature form; the sequence is GLYHSYYQNNPCSSNDISGVCN.

It belongs to the gliadin/glutenin family. Interacts with OP10 (via N-terminus).

The protein localises to the cell membrane. In terms of biological role, zeins are major seed storage proteins. The chain is 50 kDa gamma-zein from Zea mays (Maize).